Reading from the N-terminus, the 60-residue chain is Metallothionein B (60 aa).

The beta stretch occupies residues 1 to 28 (MDPCDCSKSGTCNCGGSCTCTNCSCTSC). Residues Cys-4, Cys-6, Cys-12, Cys-14, Cys-18, Cys-20, Cys-23, Cys-25, Cys-28, Cys-32, Cys-33, Cys-35, Cys-36, Cys-40, Cys-43, Cys-47, Cys-49, Cys-54, Cys-58, and Cys-59 each contribute to the a divalent metal cation site. Residues 29–60 (KKSCCPCCPSGCTKCASGCVCKGKTCDTSCCQ) are alpha.

It belongs to the metallothionein superfamily. Type 1 family.

Its function is as follows. Metallothioneins have a high content of cysteine residues that bind various heavy metals. This chain is Metallothionein B (mtb), found in Chionodraco hamatus (Antarctic teleost icefish).